The chain runs to 394 residues: S-adenosylmethionine synthase 2 (394 aa).

E11 lines the Mg(2+) pocket. H17 contributes to the ATP binding site. E45 provides a ligand contact to K(+). L-methionine-binding residues include E58 and Q101. Residues 169-171 (DGK), 237-240 (SGRF), D248, 254-255 (RK), A271, K275, and K279 contribute to the ATP site. D248 provides a ligand contact to L-methionine. An L-methionine-binding site is contributed by K279.

Belongs to the AdoMet synthase family. In terms of assembly, homotetramer. Requires Mn(2+) as cofactor. Mg(2+) serves as cofactor. Co(2+) is required as a cofactor. It depends on K(+) as a cofactor.

Its subcellular location is the cytoplasm. It catalyses the reaction L-methionine + ATP + H2O = S-adenosyl-L-methionine + phosphate + diphosphate. Its pathway is amino-acid biosynthesis; S-adenosyl-L-methionine biosynthesis; S-adenosyl-L-methionine from L-methionine: step 1/1. Its function is as follows. Catalyzes the formation of S-adenosylmethionine from methionine and ATP. The reaction comprises two steps that are both catalyzed by the same enzyme: formation of S-adenosylmethionine (AdoMet) and triphosphate, and subsequent hydrolysis of the triphosphate. The protein is S-adenosylmethionine synthase 2 (SAM2) of Hordeum vulgare (Barley).